The sequence spans 67 residues: MHPIIWELSHMVDLQAAAQKLKRCYQRRVAITAGGLKHRLMSSLIIIIIIRINYLRDNSVIILESSY.

The first 21 residues, 1–21, serve as a signal peptide directing secretion; sequence MHPIIWELSHMVDLQAAAQKL.

As to expression, expressed by the venom gland.

It is found in the secreted. Shows contractile activity on isolated ileum smooth muscle. This Vespa magnifica (Hornet) protein is Vespin.